Reading from the N-terminus, the 395-residue chain is Prostaglandin D2 receptor 2 (395 aa).

At 1–33 (MSANATLKPLCPILEQMSRLQSHSNTSIRYIDH) the chain is on the extracellular side. 2 N-linked (GlcNAc...) asparagine glycosylation sites follow: N4 and N25. A helical transmembrane segment spans residues 34–56 (AAVLLHGLASLLGLVENGVILFV). Over 57–67 (VGCRMRQTVVT) the chain is Cytoplasmic. A helical transmembrane segment spans residues 68–89 (TWVLHLALSDLLASASLPFFTY). Over 90–106 (FLAVGHSWELGTTFCKL) the chain is Extracellular. C104 and C182 are joined by a disulfide. Residues 107-127 (HSSIFFLNMFASGFLLSAISL) form a helical membrane-spanning segment. Topologically, residues 128 to 146 (DRCLQVVRPVWAQNHRTVA) are cytoplasmic. A helical membrane pass occupies residues 147–168 (AAHKVCLVLWALAVLNTVPYFV). Over 169–210 (FRDTISRLDGRIMCYYNVLLLNPGPDRDATCNSRQVALAVSK) the chain is Extracellular. Residues 211–231 (FLLAFLVPLAIIASSHAAVSL) traverse the membrane as a helical segment. At 232–247 (RLQHRGRRRPGRFVRL) the chain is on the cytoplasmic side. Residues 248–269 (VAAVVAAFALCWGPYHVFSLLE) form a helical membrane-spanning segment. Over 270–288 (ARAHANPGLRPLVWRGLPF) the chain is Extracellular. Residues 289–308 (VTSLAFFNSVANPVLYVLTC) form a helical membrane-spanning segment. The Cytoplasmic portion of the chain corresponds to 309–395 (PDMLRKLRRS…LNRALSSTSS (87 aa)). The short motif at 330–333 (DSEL) is the Involved in the recycling of CRTH2 element. S331 and S345 each carry phosphoserine. Positions 333–363 (LGGAGSSRRRRTSSTARSASPLALCSRPEEP) are disordered.

The protein belongs to the G-protein coupled receptor 1 family. Post-translationally, phosphorylated. As to expression, widespread expression. High expression in stomach, small intestine, heart and thymus. Intermediate expression in colon, spinal cord and peripheral blood and low expression in brain, skeletal muscle and spleen. Expressed also on Th2- and Tc2- type cells, eosinophils and basophils.

It localises to the cell membrane. Its function is as follows. Receptor for prostaglandin D2 (PGD2). Coupled to the G(i)-protein. Receptor activation may result in pertussis toxin-sensitive decreases in cAMP levels and Ca(2+) mobilization. PI3K signaling is also implicated in mediating PTGDR2 effects. PGD2 induced receptor internalization. CRTH2 internalization can be regulated by diverse kinases such as, PKC, PKA, GRK2, GPRK5/GRK5 and GRK6. Receptor activation is responsible, at least in part, in immune regulation and allergic/inflammation responses. The chain is Prostaglandin D2 receptor 2 (PTGDR2) from Homo sapiens (Human).